The sequence spans 383 residues: Putative glutamate--cysteine ligase 2-2 (383 aa).

Belongs to the glutamate--cysteine ligase type 2 family. YbdK subfamily.

The enzyme catalyses L-cysteine + L-glutamate + ATP = gamma-L-glutamyl-L-cysteine + ADP + phosphate + H(+). ATP-dependent carboxylate-amine ligase which exhibits weak glutamate--cysteine ligase activity. The sequence is that of Putative glutamate--cysteine ligase 2-2 from Paenarthrobacter aurescens (strain TC1).